Here is a 119-residue protein sequence, read N- to C-terminus: Hisactophilin-3 (119 aa).

Residue glycine 2 is the site of N-myristoyl glycine attachment. The contains several HHXH repeats stretch occupies residues 8-110 (SHHGHFLSAE…SIYTTHHHHH (103 aa)). 2 repeat units span residues 34–47 (FHVE…VAIR) and 75–87 (FHLE…VSIK). The segment at 34–87 (FHVENHGHHKVAIRTHANKYVSINDNNDVYISHHFHGEHSLFHLEHHGGKVSIK) is 2 X 13 AA approximate repeats.

Belongs to the hisactophilin family. In terms of processing, phosphorylated.

It is found in the cytoplasm. The protein localises to the cell membrane. May act as an intracellular pH sensor that links chemotactic signals to responses in the microfilament system of the cells by nucleating actin polymerization or stabilizing the filaments. The chain is Hisactophilin-3 (hatC) from Dictyostelium discoideum (Social amoeba).